A 1071-amino-acid polypeptide reads, in one-letter code: Carbamoyl phosphate synthase large chain (1071 aa).

The segment at 1-399 (MPKREDIKKV…SLLKAFKSLD (399 aa)) is carboxyphosphate synthetic domain. Residues arginine 129, arginine 169, glycine 175, glycine 176, glutamate 208, valine 210, glutamate 215, glycine 241, valine 242, histidine 243, glutamine 284, and glutamate 296 each contribute to the ATP site. Residues 133–325 (KETMLRIGEK…IARVTAKIAI (193 aa)) enclose the ATP-grasp 1 domain. Mg(2+) is bound by residues glutamine 284, glutamate 296, and asparagine 298. Mn(2+) is bound by residues glutamine 284, glutamate 296, and asparagine 298. The interval 400-540 (IDNQLGNKHW…YSTYEDSCET (141 aa)) is oligomerization domain. Positions 541 to 932 (NATTDKKKIL…YKAELAADNV (392 aa)) are carbamoyl phosphate synthetic domain. Residues 673–864 (YILMKELGVP…LAKIAAKVIA (192 aa)) enclose the ATP-grasp 2 domain. ATP is bound by residues arginine 709, aspartate 748, leucine 750, glutamate 755, glycine 780, valine 781, histidine 782, serine 783, glutamine 823, and glutamate 835. Mg(2+)-binding residues include glutamine 823, glutamate 835, and asparagine 837. The Mn(2+) site is built by glutamine 823, glutamate 835, and asparagine 837. Positions 931-1071 (NVLPLTGKVF…INEYHKEMEN (141 aa)) constitute an MGS-like domain. The interval 933 to 1071 (LPLTGKVFLS…INEYHKEMEN (139 aa)) is allosteric domain.

This sequence belongs to the CarB family. Composed of two chains; the small (or glutamine) chain promotes the hydrolysis of glutamine to ammonia, which is used by the large (or ammonia) chain to synthesize carbamoyl phosphate. Tetramer of heterodimers (alpha,beta)4. The cofactor is Mg(2+). Mn(2+) serves as cofactor.

The enzyme catalyses hydrogencarbonate + L-glutamine + 2 ATP + H2O = carbamoyl phosphate + L-glutamate + 2 ADP + phosphate + 2 H(+). It catalyses the reaction hydrogencarbonate + NH4(+) + 2 ATP = carbamoyl phosphate + 2 ADP + phosphate + 2 H(+). It participates in amino-acid biosynthesis; L-arginine biosynthesis; carbamoyl phosphate from bicarbonate: step 1/1. It functions in the pathway pyrimidine metabolism; UMP biosynthesis via de novo pathway; (S)-dihydroorotate from bicarbonate: step 1/3. Large subunit of the glutamine-dependent carbamoyl phosphate synthetase (CPSase). CPSase catalyzes the formation of carbamoyl phosphate from the ammonia moiety of glutamine, carbonate, and phosphate donated by ATP, constituting the first step of 2 biosynthetic pathways, one leading to arginine and/or urea and the other to pyrimidine nucleotides. The large subunit (synthetase) binds the substrates ammonia (free or transferred from glutamine from the small subunit), hydrogencarbonate and ATP and carries out an ATP-coupled ligase reaction, activating hydrogencarbonate by forming carboxy phosphate which reacts with ammonia to form carbamoyl phosphate. This chain is Carbamoyl phosphate synthase large chain, found in Methanosarcina barkeri (strain Fusaro / DSM 804).